Here is a 376-residue protein sequence, read N- to C-terminus: Glycerol-3-phosphate acyltransferase 9 (376 aa).

Residues 1 to 78 (MSSTAGRLVT…SNPPEPWNWN (78 aa)) are Cytoplasmic-facing. A Phosphoserine modification is found at Ser13. A run of 3 helical transmembrane segments spans residues 79–99 (IYLF…LFPL), 102–122 (FTLA…NALL), and 135–155 (VLVE…VKYH). Over 156–376 (GPRPSIRPKQ…ESILARLEEK (221 aa)) the chain is Cytoplasmic. The catalytic stretch occupies residues 168-180 (VANHTSMIDFIVL). The HXXXXD motif motif lies at 171–176 (HTSMID). Residue 209–218 (GCIWFNRSEA) participates in sn-glycerol 3-phosphate binding. Positions 242 to 262 (IFPEGTCVNNNYTVMFKKGAF) are glycerol-3-phosphate binding. Residues 266–275 (CTVCPIAIKY) are catalytic. The tract at residues 369 to 373 (ILARL) is endoplasmic reticulum targeting.

Belongs to the 1-acyl-sn-glycerol-3-phosphate acyltransferase family. As to quaternary structure, self-interacts. Interacts with LPAT2 and LPCAT2. Up-regulated during embryogenesis. Expressed in seedlings, leaves, stems, roots, floral buds, flowers, pollen, and siliques at various developmental stages.

The protein localises to the endoplasmic reticulum membrane. It carries out the reaction sn-glycerol 3-phosphate + an acyl-CoA = a 1-acyl-sn-glycero-3-phosphate + CoA. It functions in the pathway glycerolipid metabolism; triacylglycerol biosynthesis. Functionally, essential protein. Required for male and female gametophytes development. Exhibits sn-1 acyltransferase activity with high specificity for acyl-coenzyme A, thus triggering storage lipid biosynthesis and playing an important role in the Kennedy pathway of glycerolipid biosynthesis. Catalyzes triacylglycerol (TAG) accumulation involved in membrane lipid and oil biosynthesis, especially in seeds. Also contributes to the biosynthesis of both polar lipids and TAG in developing leaves, as well as lipid droplet production in developing pollen grains. Seems to not contribute to surface lipid biosynthesis (e.g. waxes and cutin). This is Glycerol-3-phosphate acyltransferase 9 from Arabidopsis thaliana (Mouse-ear cress).